The chain runs to 102 residues: Small ribosomal subunit protein uS10 (102 aa).

Belongs to the universal ribosomal protein uS10 family. Part of the 30S ribosomal subunit.

Functionally, involved in the binding of tRNA to the ribosomes. This is Small ribosomal subunit protein uS10 from Methylobacillus flagellatus (strain ATCC 51484 / DSM 6875 / VKM B-1610 / KT).